A 691-amino-acid chain; its full sequence is DNA ligase (691 aa).

NAD(+) is bound by residues 41 to 45 (DAEYD), 90 to 91 (SL), and Glu-130. The N6-AMP-lysine intermediate role is filled by Lys-132. NAD(+) is bound by residues Arg-153, Glu-190, Lys-307, and Lys-331. Zn(2+) is bound by residues Cys-425, Cys-428, Cys-443, and Cys-449. A BRCT domain is found at 610 to 691 (APQGVLAGKT…MHTLLEGHAR (82 aa)).

It belongs to the NAD-dependent DNA ligase family. LigA subfamily. Requires Mg(2+) as cofactor. The cofactor is Mn(2+).

It carries out the reaction NAD(+) + (deoxyribonucleotide)n-3'-hydroxyl + 5'-phospho-(deoxyribonucleotide)m = (deoxyribonucleotide)n+m + AMP + beta-nicotinamide D-nucleotide.. In terms of biological role, DNA ligase that catalyzes the formation of phosphodiester linkages between 5'-phosphoryl and 3'-hydroxyl groups in double-stranded DNA using NAD as a coenzyme and as the energy source for the reaction. It is essential for DNA replication and repair of damaged DNA. The polypeptide is DNA ligase (Burkholderia pseudomallei (strain 1710b)).